Here is a 972-residue protein sequence, read N- to C-terminus: Nuclear factor NF-kappa-B p105 subunit (972 aa).

The RHD domain maps to A39 to N246. The residue at position 61 (C61) is an S-nitrosocysteine; alternate. The S-(15-deoxy-Delta12,14-prostaglandin J2-9-yl)cysteine; alternate moiety is linked to residue C61. K325 participates in a covalent cross-link: Glycyl lysine isopeptide (Lys-Gly) (interchain with G-Cter in SUMO2). S337 carries the phosphoserine; by PKA modification. The Nuclear localization signal motif lies at Q360–K365. Residues D372–G394 form a GRR region. The interval K425–M473 is disordered. An N6-acetyllysine; by EP300 mark is found at K431 and K440. The interaction with CFLAR stretch occupies residues I435–I972. Positions S439–A454 are enriched in basic and acidic residues. 6 ANK repeats span residues N539 to S568, L578 to L607, L611 to L640, E647 to A676, S681 to S711, and D715 to V744. Residues E647–S681 are essential for interaction with HIF1AN. A (3S)-3-hydroxyasparagine; by HIF1AN modification is found at N675. Phosphoserine is present on S756. The stretch at P768–D798 is one ANK 7 repeat. The Death domain maps to L814–F889. The interval T894–D926 is disordered. Over residues Q905–S918 the composition is skewed to polar residues. 2 positions are modified to phosphoserine; by GSK3-beta; in vitro: S908 and S912. S927 is subject to Phosphoserine. Phosphoserine; by IKKB is present on residues S931 and S936. S941 carries the phosphoserine modification. T947 is subject to Phosphothreonine.

Component of the NF-kappa-B p65-p50 complex. Homodimer; component of the NF-kappa-B p50-p50 complex. Component of the NF-kappa-B p105-p50 complex. Component of the NF-kappa-B p50-c-Rel complex. Component of a complex consisting of the NF-kappa-B p50-p50 homodimer and BCL3. Also interacts with MAP3K8. NF-kappa-B p50 subunit interacts with NCOA3 coactivator, which may coactivate NF-kappa-B dependent expression via its histone acetyltransferase activity. Interacts with TSC22D3; this interaction prevents nuclear translocation and DNA-binding. Interacts with SPAG9 and UNC5CL. NFKB1/p105 interacts with CFLAR; the interaction inhibits p105 processing into p50. NFKB1/p105 forms a ternary complex with MAP3K8 and TNIP2. Interacts with GSK3B; the interaction prevents processing of p105 to p50. NFKB1/p50 interacts with NFKBIE. NFKB1/p50 interacts with NFKBIZ. Nuclear factor NF-kappa-B p50 subunit interacts with NFKBID. Directly interacts with MEN1. Interacts with HIF1AN. Interacts with FEM1A; interaction is direct. In terms of processing, generation of the NF-kappa-B p50 (Nuclear factor NF-kappa-B p50 subunit) transcription factor takes place both cotranslationally and post-translationally via non-mutually exclusive mechanisms. A cotranslational processing allows the production of both p50 and p105 (Nuclear factor NF-kappa-B p105 subunit) from a single NFKB1 mRNA. While translation occurs, the particular unfolded structure after the GRR repeat region acts as a substrate for the proteasome, promoting degradation of the C-terminus. The GRR acts as a proteasomal 'stop signal', protecting the region upstream of the GRR from degradation and promoting generation of p50. It is unclear if limited proteasome degradation during cotranslational processing depends on ubiquitination. NF-kappa-B p50 is also generated post-translationally following ubiquitination by the KPC complex, leading to limited processing by the proteasome downstream of the GRR region, thereby generating p50. Post-translationally, phosphorylation at the C-terminus by IKBKB/IKKB acts as a signal for ubiquitination and promotes either complete degradation or processing to generate the NF-kappa-B p50 (Nuclear factor NF-kappa-B p50 subunit). Phosphorylation at Ser-908 and Ser-912 primes p105 for proteolytic processing in response to TNF-alpha stimulation. Phosphorylation at Ser-927, Ser-931 and Ser-936 are required for BTRC/BTRCP-mediated ubiquitination and proteolysis. Phosphorylation at Ser-931 is also required for ubiquitination by the KPC complex and limited processing to generate NF-kappa-B p50 (Nuclear factor NF-kappa-B p50 subunit). Polyubiquitinated at multiple Lys residues in the C-terminus. Polyubiquitinated by the SCF(FBXW11) and SCF(BTRC) complexes following phosphorylation at Ser-923, Ser-927, Ser-931 and Ser-936, leading to its complete degradation. In contrast, polyubiquitination by the KPC complex following phosphorylation at Ser-931 leads to limited proteosomal processing and generation of the active NF-kappa-B p50 (Nuclear factor NF-kappa-B p50 subunit). In terms of processing, S-nitrosylation of Cys-61 affects DNA binding. Post-translationally, the covalent modification of cysteine by 15-deoxy-Delta12,14-prostaglandin-J2 is autocatalytic and reversible. It may occur as an alternative to other cysteine modifications, such as S-nitrosylation and S-palmitoylation.

Its subcellular location is the cytoplasm. It localises to the nucleus. Functionally, NF-kappa-B is a pleiotropic transcription factor present in almost all cell types and is the endpoint of a series of signal transduction events that are initiated by a vast array of stimuli related to many biological processes such as inflammation, immunity, differentiation, cell growth, tumorigenesis and apoptosis. NF-kappa-B is a homo- or heterodimeric complex formed by the Rel-like domain-containing proteins RELA/p65, RELB, NFKB1/p105, NFKB1/p50, REL and NFKB2/p52 and the heterodimeric p65-p50 complex appears to be most abundant one. The dimers bind at kappa-B sites in the DNA of their target genes and the individual dimers have distinct preferences for different kappa-B sites that they can bind with distinguishable affinity and specificity. Different dimer combinations act as transcriptional activators or repressors, respectively. NF-kappa-B is controlled by various mechanisms of post-translational modification and subcellular compartmentalization as well as by interactions with other cofactors or corepressors. NF-kappa-B complexes are held in the cytoplasm in an inactive state complexed with members of the NF-kappa-B inhibitor (I-kappa-B) family. In a conventional activation pathway, I-kappa-B is phosphorylated by I-kappa-B kinases (IKKs) in response to different activators, subsequently degraded thus liberating the active NF-kappa-B complex which translocates to the nucleus. NF-kappa-B heterodimeric p65-p50 and RelB-p50 complexes are transcriptional activators. The NF-kappa-B p50-p50 homodimer is a transcriptional repressor, but can act as a transcriptional activator when associated with BCL3. NFKB1 appears to have dual functions such as cytoplasmic retention of attached NF-kappa-B proteins by p105 and generation of p50 by a cotranslational processing. The proteasome-mediated process ensures the production of both p50 and p105 and preserves their independent function, although processing of NFKB1/p105 also appears to occur post-translationally. p50 binds to the kappa-B consensus sequence 5'-GGRNNYYCC-3', located in the enhancer region of genes involved in immune response and acute phase reactions. In a complex with MAP3K8, NFKB1/p105 represses MAP3K8-induced MAPK signaling; active MAP3K8 is released by proteasome-dependent degradation of NFKB1/p105. In terms of biological role, P105 is the precursor of the active p50 subunit (Nuclear factor NF-kappa-B p50 subunit) of the nuclear factor NF-kappa-B. Acts as a cytoplasmic retention of attached NF-kappa-B proteins by p105. Its function is as follows. Constitutes the active form, which associates with RELA/p65 to form the NF-kappa-B p65-p50 complex to form a transcription factor. Together with RELA/p65, binds to the kappa-B consensus sequence 5'-GGRNNYYCC-3', located in the enhancer region of genes involved in immune response and acute phase reactions. The chain is Nuclear factor NF-kappa-B p105 subunit (NFKB1) from Canis lupus familiaris (Dog).